We begin with the raw amino-acid sequence, 385 residues long: Rubredoxin-NAD(+) reductase (385 aa).

Residues 8 to 11, 32 to 33, I79, E156, D275, and I293 contribute to the FAD site; these read AGTA and SR.

This sequence belongs to the FAD-dependent oxidoreductase family. In terms of assembly, homodimer. The cofactor is FAD.

It is found in the cytoplasm. The enzyme catalyses 2 reduced [rubredoxin] + NAD(+) + H(+) = 2 oxidized [rubredoxin] + NADH. It participates in hydrocarbon metabolism; alkane degradation. Functionally, involved in the hydrocarbon hydroxylating system, which transfers electrons from NADH to rubredoxin reductase and then through rubredoxin to alkane 1 monooxygenase. The polypeptide is Rubredoxin-NAD(+) reductase (alkT) (Ectopseudomonas oleovorans (Pseudomonas oleovorans)).